The sequence spans 87 residues: Putative defensin-like protein 238 (87 aa).

The N-terminal stretch at 1 to 23 (MRSITWFIVFCVFMFIALNHVKG) is a signal peptide. Intrachain disulfides connect cysteine 30-cysteine 87, cysteine 40-cysteine 65, cysteine 48-cysteine 78, and cysteine 63-cysteine 80.

This sequence belongs to the DEFL family.

It is found in the secreted. This Arabidopsis thaliana (Mouse-ear cress) protein is Putative defensin-like protein 238 (SCRL16).